A 379-amino-acid polypeptide reads, in one-letter code: Oxidized polyvinyl alcohol hydrolase (379 aa).

Residues 1 to 23 (MNQSLGVLRLTRGVIALALASVA) form the signal peptide. Active-site charge relay system residues include Ser-203 and Ser-309.

Belongs to the peptidase S9A family. In terms of assembly, monomer.

It carries out the reaction nonane-4,6-dione + H2O = pentan-2-one + butanoate + H(+). Its function is as follows. Catalyzes the hydrolysis of 4,6-nonanedione, a beta-diketone compound. Also mediates hydrolysis of oxidized polyvinyl alcohol (PVA) in the second step in the degradation of polyvinyl alcohol. Not active toward the monoketone structure. The chain is Oxidized polyvinyl alcohol hydrolase (pvaB) from Pseudomonas sp.